We begin with the raw amino-acid sequence, 392 residues long: Dual-specificity RNA methyltransferase RlmN (392 aa).

E115 serves as the catalytic Proton acceptor. The 238-residue stretch at 121-358 (EVDRGTLCIS…YKAGYASPIR (238 aa)) folds into the Radical SAM core domain. C128 and C369 are joined by a disulfide. The [4Fe-4S] cluster site is built by C135, C139, and C142. Residues 195–196 (GE), S227, 249–251 (SFH), and N326 contribute to the S-adenosyl-L-methionine site. C369 acts as the S-methylcysteine intermediate in catalysis.

It belongs to the radical SAM superfamily. RlmN family. [4Fe-4S] cluster is required as a cofactor.

The protein resides in the cytoplasm. It carries out the reaction adenosine(2503) in 23S rRNA + 2 reduced [2Fe-2S]-[ferredoxin] + 2 S-adenosyl-L-methionine = 2-methyladenosine(2503) in 23S rRNA + 5'-deoxyadenosine + L-methionine + 2 oxidized [2Fe-2S]-[ferredoxin] + S-adenosyl-L-homocysteine. It catalyses the reaction adenosine(37) in tRNA + 2 reduced [2Fe-2S]-[ferredoxin] + 2 S-adenosyl-L-methionine = 2-methyladenosine(37) in tRNA + 5'-deoxyadenosine + L-methionine + 2 oxidized [2Fe-2S]-[ferredoxin] + S-adenosyl-L-homocysteine. Its function is as follows. Specifically methylates position 2 of adenine 2503 in 23S rRNA and position 2 of adenine 37 in tRNAs. m2A2503 modification seems to play a crucial role in the proofreading step occurring at the peptidyl transferase center and thus would serve to optimize ribosomal fidelity. The polypeptide is Dual-specificity RNA methyltransferase RlmN (Jannaschia sp. (strain CCS1)).